A 197-amino-acid chain; its full sequence is Holliday junction branch migration complex subunit RuvA (197 aa).

Residues 1-63 (MIALLNGQLI…EDALLLFGFL (63 aa)) are domain I. Positions 64–142 (TETEKDLFGL…PVQAVPGNAP (79 aa)) are domain II. The interval 142 to 146 (PLPAE) is flexible linker. A domain III region spans residues 147-197 (TAGDLREDALSALVNLGYKENLSRKALDGIDTAPDAPLEDILKQALKLLMR).

The protein belongs to the RuvA family. Homotetramer. Forms an RuvA(8)-RuvB(12)-Holliday junction (HJ) complex. HJ DNA is sandwiched between 2 RuvA tetramers; dsDNA enters through RuvA and exits via RuvB. An RuvB hexamer assembles on each DNA strand where it exits the tetramer. Each RuvB hexamer is contacted by two RuvA subunits (via domain III) on 2 adjacent RuvB subunits; this complex drives branch migration. In the full resolvosome a probable DNA-RuvA(4)-RuvB(12)-RuvC(2) complex forms which resolves the HJ.

Its subcellular location is the cytoplasm. In terms of biological role, the RuvA-RuvB-RuvC complex processes Holliday junction (HJ) DNA during genetic recombination and DNA repair, while the RuvA-RuvB complex plays an important role in the rescue of blocked DNA replication forks via replication fork reversal (RFR). RuvA specifically binds to HJ cruciform DNA, conferring on it an open structure. The RuvB hexamer acts as an ATP-dependent pump, pulling dsDNA into and through the RuvAB complex. HJ branch migration allows RuvC to scan DNA until it finds its consensus sequence, where it cleaves and resolves the cruciform DNA. This chain is Holliday junction branch migration complex subunit RuvA, found in Syntrophotalea carbinolica (strain DSM 2380 / NBRC 103641 / GraBd1) (Pelobacter carbinolicus).